A 118-amino-acid chain; its full sequence is Large ribosomal subunit protein uL22 (118 aa).

Belongs to the universal ribosomal protein uL22 family. Part of the 50S ribosomal subunit.

Its function is as follows. This protein binds specifically to 23S rRNA; its binding is stimulated by other ribosomal proteins, e.g. L4, L17, and L20. It is important during the early stages of 50S assembly. It makes multiple contacts with different domains of the 23S rRNA in the assembled 50S subunit and ribosome. Functionally, the globular domain of the protein is located near the polypeptide exit tunnel on the outside of the subunit, while an extended beta-hairpin is found that lines the wall of the exit tunnel in the center of the 70S ribosome. The polypeptide is Large ribosomal subunit protein uL22 (Chlorobium limicola (strain DSM 245 / NBRC 103803 / 6330)).